The chain runs to 263 residues: MADWLIGLIMGAVEGLTEFLPVSSTGHMILTGHLIGFDDERAKVFEVVIQLGSILAVVVIFWKRLWSLVGIGKVTDGPSLNLLHIIIGMIPAGVLGVLFHSTIKEGLFGPGPVVISLVAGGILMIVAEKFSKPSTARTLDEITYKQAFTIGMFQCLALWPGFSRSGSTISGGLLARVSHTAAAEYTFILAVPMMVAASGLDLIKSWDVLSSADITLFVTGFVTAFVVAMLAIVSFLKLLSRVKLTPFAYYRFILAAVFYFFIM.

The next 8 helical transmembrane spans lie at 15-37 (GLTEFLPVSSTGHMILTGHLIGF), 42-62 (AKVFEVVIQLGSILAVVVIFW), 79-99 (SLNLLHIIIGMIPAGVLGVLF), 107-127 (LFGPGPVVISLVAGGILMIVA), 142-162 (ITYKQAFTIGMFQCLALWPGF), 183-203 (AEYTFILAVPMMVAASGLDLI), 216-236 (LFVTGFVTAFVVAMLAIVSFL), and 242-262 (VKLTPFAYYRFILAAVFYFFI).

Belongs to the UppP family.

The protein resides in the cell membrane. It carries out the reaction di-trans,octa-cis-undecaprenyl diphosphate + H2O = di-trans,octa-cis-undecaprenyl phosphate + phosphate + H(+). Its function is as follows. Catalyzes the dephosphorylation of undecaprenyl diphosphate (UPP). Confers resistance to bacitracin. The chain is Undecaprenyl-diphosphatase 2 from Bacillus cereus (strain ATCC 14579 / DSM 31 / CCUG 7414 / JCM 2152 / NBRC 15305 / NCIMB 9373 / NCTC 2599 / NRRL B-3711).